The following is a 344-amino-acid chain: Probable nicotinate-nucleotide adenylyltransferase/Ap4A hydrolase (344 aa).

The tract at residues 1–182 (MIFGGAFDPL…YIHQHNIYLK (182 aa)) is naMN adenylyltransferase. The interval 191 to 344 (EPRMQHCLRV…LKYVRSLQKN (154 aa)) is ap4A hydrolase. An HD domain is found at 193-304 (RMQHCLRVGQ…IYLADKLEPM (112 aa)). ADP is bound at residue histidine 196. Residues histidine 196, histidine 225, and aspartate 226 each contribute to the Fe cation site. ADP contacts are provided by residues 226–229 (DLAK), histidine 255, 281–282 (HT), aspartate 299, and arginine 305. Aspartate 299 serves as a coordination point for Fe cation.

This sequence in the N-terminal section; belongs to the NadD family. The protein in the C-terminal section; belongs to the Ap4A hydrolase YqeK family.

It catalyses the reaction nicotinate beta-D-ribonucleotide + ATP + H(+) = deamido-NAD(+) + diphosphate. The enzyme catalyses P(1),P(4)-bis(5'-adenosyl) tetraphosphate + H2O = 2 ADP + 2 H(+). It participates in cofactor biosynthesis; NAD(+) biosynthesis; deamido-NAD(+) from nicotinate D-ribonucleotide: step 1/1. In terms of biological role, catalyzes the reversible adenylation of nicotinate mononucleotide (NaMN) to nicotinic acid adenine dinucleotide (NaAD). Hydrolyzes diadenosine 5',5'''-P1,P4-tetraphosphate (Ap4A) to yield ADP. The polypeptide is Probable nicotinate-nucleotide adenylyltransferase/Ap4A hydrolase (Mycoplasma pneumoniae (strain ATCC 29342 / M129 / Subtype 1) (Mycoplasmoides pneumoniae)).